The chain runs to 299 residues: Tyrosine recombinase XerC (299 aa).

Residues 1-85 (MQADLDAFLD…ALRGFYRYLL (85 aa)) enclose the Core-binding (CB) domain. Residues 106-285 (RLPRTLDADR…DFQHLAAVYD (180 aa)) form the Tyr recombinase domain. Catalysis depends on residues R146, K170, H237, R240, and H263. The active-site O-(3'-phospho-DNA)-tyrosine intermediate is Y272.

It belongs to the 'phage' integrase family. XerC subfamily. As to quaternary structure, forms a cyclic heterotetrameric complex composed of two molecules of XerC and two molecules of XerD.

It is found in the cytoplasm. Its function is as follows. Site-specific tyrosine recombinase, which acts by catalyzing the cutting and rejoining of the recombining DNA molecules. The XerC-XerD complex is essential to convert dimers of the bacterial chromosome into monomers to permit their segregation at cell division. It also contributes to the segregational stability of plasmids. In Azotobacter vinelandii (strain DJ / ATCC BAA-1303), this protein is Tyrosine recombinase XerC.